The primary structure comprises 548 residues: 2-succinyl-5-enolpyruvyl-6-hydroxy-3-cyclohexene-1-carboxylate synthase (548 aa).

Belongs to the TPP enzyme family. MenD subfamily. Homodimer. Mg(2+) is required as a cofactor. Requires Mn(2+) as cofactor. Thiamine diphosphate serves as cofactor.

The enzyme catalyses isochorismate + 2-oxoglutarate + H(+) = 5-enolpyruvoyl-6-hydroxy-2-succinyl-cyclohex-3-ene-1-carboxylate + CO2. It participates in quinol/quinone metabolism; 1,4-dihydroxy-2-naphthoate biosynthesis; 1,4-dihydroxy-2-naphthoate from chorismate: step 2/7. The protein operates within quinol/quinone metabolism; menaquinone biosynthesis. Catalyzes the thiamine diphosphate-dependent decarboxylation of 2-oxoglutarate and the subsequent addition of the resulting succinic semialdehyde-thiamine pyrophosphate anion to isochorismate to yield 2-succinyl-5-enolpyruvyl-6-hydroxy-3-cyclohexene-1-carboxylate (SEPHCHC). The chain is 2-succinyl-5-enolpyruvyl-6-hydroxy-3-cyclohexene-1-carboxylate synthase from Mycobacterium ulcerans (strain Agy99).